The primary structure comprises 227 residues: Cytidylate kinase (227 aa).

12-20 (GPSGAGKGT) contacts ATP.

Belongs to the cytidylate kinase family. Type 1 subfamily.

The protein localises to the cytoplasm. It carries out the reaction CMP + ATP = CDP + ADP. The enzyme catalyses dCMP + ATP = dCDP + ADP. The polypeptide is Cytidylate kinase (Enterobacter sp. (strain 638)).